Consider the following 750-residue polypeptide: Tegument protein UL46 homolog (750 aa).

Disordered regions lie at residues Phe437–Thr484, Gln525–Arg593, Tyr610–Tyr669, and Ser692–Leu750. Residues Leu465–Thr484 show a composition bias toward polar residues. Residues Asp528 to Thr540 show a composition bias toward low complexity. Residues Glu541–Pro553 show a composition bias toward polar residues. 2 stretches are compositionally biased toward basic and acidic residues: residues Val710–Ile727 and Lys739–Leu750.

It belongs to the herpesviridae HHV-1 VP11/12 protein family.

Its subcellular location is the virion tegument. It is found in the host cell membrane. Its function is as follows. Modulates alpha trans-inducing factor-dependent activation of alpha genes. The protein is Tegument protein UL46 homolog of Equine herpesvirus 1 (strain V592) (EHV-1).